Here is a 621-residue protein sequence, read N- to C-terminus: Lethal(3)malignant brain tumor-like protein 4 (621 aa).

The segment at 1–48 is disordered; it reads MRQPNRKRKLSLESTERMNQDRCTGQTEEEKKPGEVTTPSKRESSVTT. Basic and acidic residues-rich tracts occupy residues 10-20 and 28-44; these read LSLESTERMNQ and EEEK…KRES. 3 MBT repeats span residues 52–152, 160–260, and 269–364; these read WSWE…LHIP, FVWM…LVAP, and FSWT…LEVP. A CCHHC-type zinc finger spans residues 370–414; the sequence is VKILPGQPACPTPGCRGIGHIRGPRYAGHHSAFGCPYSDVNLKRE. Zn(2+) is bound by residues Cys-379, Cys-384, His-398, and Cys-404. The SAM domain maps to 543–607; it reads WTVDEVAEFV…YNSILMFRNS (65 aa).

Its subcellular location is the nucleus. In terms of biological role, putative Polycomb group (PcG) protein. PcG proteins maintain the transcriptionally repressive state of genes, probably via a modification of chromatin, rendering it heritably changed in its expressibility. The protein is Lethal(3)malignant brain tumor-like protein 4 (L3mbtl4) of Mus musculus (Mouse).